The chain runs to 351 residues: Ribonucleoside-diphosphate reductase subunit beta (351 aa).

Residues aspartate 94, glutamate 124, and histidine 127 each coordinate Fe cation. Residue tyrosine 131 is part of the active site. The Fe cation site is built by glutamate 191, glutamate 225, and histidine 228.

Belongs to the ribonucleoside diphosphate reductase small chain family. Tetramer of two alpha and two beta subunits. Requires Fe cation as cofactor.

It catalyses the reaction a 2'-deoxyribonucleoside 5'-diphosphate + [thioredoxin]-disulfide + H2O = a ribonucleoside 5'-diphosphate + [thioredoxin]-dithiol. Its function is as follows. Provides the precursors necessary for DNA synthesis. Catalyzes the biosynthesis of deoxyribonucleotides from the corresponding ribonucleotides. In Treponema pallidum (strain Nichols), this protein is Ribonucleoside-diphosphate reductase subunit beta (nrdB).